The chain runs to 440 residues: Glutamyl-tRNA reductase (440 aa).

Substrate contacts are provided by residues 55–58, Ser115, 120–122, and Gln126; these read TCNR and ETQ. Cys56 acts as the Nucleophile in catalysis. 199-204 is an NADP(+) binding site; the sequence is GSGEMG.

The protein belongs to the glutamyl-tRNA reductase family. As to quaternary structure, homodimer.

It catalyses the reaction (S)-4-amino-5-oxopentanoate + tRNA(Glu) + NADP(+) = L-glutamyl-tRNA(Glu) + NADPH + H(+). It participates in porphyrin-containing compound metabolism; protoporphyrin-IX biosynthesis; 5-aminolevulinate from L-glutamyl-tRNA(Glu): step 1/2. Its function is as follows. Catalyzes the NADPH-dependent reduction of glutamyl-tRNA(Glu) to glutamate 1-semialdehyde (GSA). The sequence is that of Glutamyl-tRNA reductase from Helicobacter hepaticus (strain ATCC 51449 / 3B1).